Here is a 201-residue protein sequence, read N- to C-terminus: Inosine triphosphate pyrophosphatase (201 aa).

16–21 is a binding site for ITP; that stretch reads TGNAKK. E44 serves as a coordination point for Mg(2+). Residues K56, 72–73, K89, 148–151, K171, and 176–177 each bind ITP; these read DT, FGWD, and HR.

This sequence belongs to the HAM1 NTPase family. Homodimer. The cofactor is Mg(2+). Mn(2+) serves as cofactor.

Its subcellular location is the cytoplasm. It catalyses the reaction ITP + H2O = IMP + diphosphate + H(+). The enzyme catalyses dITP + H2O = dIMP + diphosphate + H(+). The catalysed reaction is XTP + H2O = XMP + diphosphate + H(+). Pyrophosphatase that hydrolyzes non-canonical purine nucleotides such as inosine triphosphate (ITP), deoxyinosine triphosphate (dITP) or xanthosine 5'-triphosphate (XTP) to their respective monophosphate derivatives. The enzyme does not distinguish between the deoxy- and ribose forms. Probably excludes non-canonical purines from RNA and DNA precursor pools, thus preventing their incorporation into RNA and DNA and avoiding chromosomal lesions. This is Inosine triphosphate pyrophosphatase from Sorghum bicolor (Sorghum).